A 61-amino-acid chain; its full sequence is Small ribosomal subunit protein uS14 (61 aa).

Zn(2+) is bound by residues cysteine 24, cysteine 27, cysteine 40, and cysteine 43.

It belongs to the universal ribosomal protein uS14 family. Zinc-binding uS14 subfamily. In terms of assembly, part of the 30S ribosomal subunit. Contacts proteins S3 and S10. The cofactor is Zn(2+).

Functionally, binds 16S rRNA, required for the assembly of 30S particles and may also be responsible for determining the conformation of the 16S rRNA at the A site. The polypeptide is Small ribosomal subunit protein uS14 (Borrelia duttonii (strain Ly)).